A 222-amino-acid polypeptide reads, in one-letter code: Uridine diphosphate glucose pyrophosphatase NUDT14 (222 aa).

Residues 38–206 (KTHDSVTVLL…DIPKTLGVIF (169 aa)) form the Nudix hydrolase domain. Residues 111–129 (PGLSLEEVACKEAWEECGY) carry the Nudix box motif.

It belongs to the Nudix hydrolase family. In terms of assembly, homodimer. Mg(2+) serves as cofactor.

The protein localises to the cytoplasm. It carries out the reaction UDP-sugar + H2O = UMP + alpha-D-aldose 1-phosphate.. Functionally, hydrolyzes UDP-glucose to glucose 1-phosphate and UMP and ADP-ribose to ribose 5-phosphate and AMP. The physiological substrate is probably UDP-glucose. Poor activity on other substrates such as ADP-glucose, CDP-glucose, GDP-glucose and GDP-mannose. The polypeptide is Uridine diphosphate glucose pyrophosphatase NUDT14 (NUDT14) (Homo sapiens (Human)).